Here is a 247-residue protein sequence, read N- to C-terminus: DNA polymerase sliding clamp (247 aa).

It belongs to the PCNA family. In terms of assembly, homotrimer. The subunits circularize to form a toroid; DNA passes through its center. Replication factor C (RFC) is required to load the toroid on the DNA.

Functionally, sliding clamp subunit that acts as a moving platform for DNA processing. Responsible for tethering the catalytic subunit of DNA polymerase and other proteins to DNA during high-speed replication. The chain is DNA polymerase sliding clamp from Methanosphaerula palustris (strain ATCC BAA-1556 / DSM 19958 / E1-9c).